A 566-amino-acid chain; its full sequence is MSELETGTAAHGTPVENKSVSSSQASTPTNVGSRDDLKVDDDNHSVDAIELPKKPRSAYITVSILCLMVAFGGFVFGWDTGTISGFVNQTDFIRRFGQEKADGSHYLSNVRTGLIVSIFNIGCAIGGIILSKLGDMYGRRIGLMIVVLIYVVGIIIQIASIDKWYQYFIGRIISGLGVGGISVLSPMLISETAPKHIRGTLVSFYQLMITFGIFLGYCTNYGTKTYSNSVQWRVPLGLCFAWAIFMITGMLFVPESPRFLVEKDRIDEAKRSIAKSNKVSYEDPAVQAEVDLICAGVEAERLAGSASIKELFSTKTKVFQRLIMGMLIQSFQQLTGNNYFFYYGTTIFNSVGMDDSFETSIVLGIVNFASTFVAIYVVDKFGRRKCLLWGAAAMTACMVVFASVGVTRLWPDGANHPETASKGAGNCMIVFACFYIFCFATSWAPIAYVVVAESYPLRVKAKCMAIATASNWIWGFLNGFFTPFITSAIHFYYGYVFMGCLVAMFFYVFFFVPETKGLTLEEVQEMWEEGVLPWKSSSWVPSSRRNAGYDVDALQHDEKPWYKAML.

The interval 1–39 (MSELETGTAAHGTPVENKSVSSSQASTPTNVGSRDDLKV) is disordered. The segment covering 16-32 (ENKSVSSSQASTPTNVG) has biased composition (polar residues). Residues 22–61 (SSQASTPTNVGSRDDLKVDDDNHSVDAIELPKKPRSAYIT) are Cytoplasmic-facing. Residues 62-82 (VSILCLMVAFGGFVFGWDTGT) form a helical membrane-spanning segment. The Extracellular portion of the chain corresponds to 83–112 (ISGFVNQTDFIRRFGQEKADGSHYLSNVRT). Residue Asn-88 is glycosylated (N-linked (GlcNAc...) asparagine). A helical membrane pass occupies residues 113 to 133 (GLIVSIFNIGCAIGGIILSKL). Residues 134–140 (GDMYGRR) are Cytoplasmic-facing. Residues 141 to 161 (IGLMIVVLIYVVGIIIQIASI) form a helical membrane-spanning segment. Residues 162 to 166 (DKWYQ) lie on the Extracellular side of the membrane. A helical membrane pass occupies residues 167–187 (YFIGRIISGLGVGGISVLSPM). Residues 188-198 (LISETAPKHIR) are Cytoplasmic-facing. Residues 199-219 (GTLVSFYQLMITFGIFLGYCT) form a helical membrane-spanning segment. Topologically, residues 220 to 233 (NYGTKTYSNSVQWR) are extracellular. A helical membrane pass occupies residues 234 to 254 (VPLGLCFAWAIFMITGMLFVP). Over 255–333 (ESPRFLVEKD…MGMLIQSFQQ (79 aa)) the chain is Cytoplasmic. The chain crosses the membrane as a helical span at residues 334 to 353 (LTGNNYFFYYGTTIFNSVGM). Residues 354–357 (DDSF) lie on the Extracellular side of the membrane. A helical membrane pass occupies residues 358–378 (ETSIVLGIVNFASTFVAIYVV). Residues 379–385 (DKFGRRK) are Cytoplasmic-facing. Residues 386 to 406 (CLLWGAAAMTACMVVFASVGV) form a helical membrane-spanning segment. Residues 407 to 428 (TRLWPDGANHPETASKGAGNCM) lie on the Extracellular side of the membrane. A helical transmembrane segment spans residues 429–449 (IVFACFYIFCFATSWAPIAYV). Residues 450-465 (VVAESYPLRVKAKCMA) are Cytoplasmic-facing. A helical membrane pass occupies residues 466–486 (IATASNWIWGFLNGFFTPFIT). Residues 487 to 492 (SAIHFY) lie on the Extracellular side of the membrane. Residues 493-513 (YGYVFMGCLVAMFFYVFFFVP) traverse the membrane as a helical segment. Residues 514-566 (ETKGLTLEEVQEMWEEGVLPWKSSSWVPSSRRNAGYDVDALQHDEKPWYKAML) are Cytoplasmic-facing.

It belongs to the major facilitator superfamily. Sugar transporter (TC 2.A.1.1) family.

It localises to the membrane. In terms of biological role, probable glucose transporter. This is Hexose transporter 2 (KHT2) from Kluyveromyces lactis (Yeast).